Here is a 381-residue protein sequence, read N- to C-terminus: Secretion apparatus protein BsaZ (381 aa).

The next 4 membrane-spanning stretches (helical) occupy residues 28–48, 80–100, 134–154, and 175–195; these read IVAL…VDLT, IAAP…LVQS, AVKA…FADL, and IVLT…VLIV. Residues 343–381 form a disordered region; it reads NRGGPPREMPPEATHAPDAHGGDAASGGATSAQAGERNA. A compositionally biased stretch (low complexity) spans 364–381; that stretch reads GDAASGGATSAQAGERNA.

It belongs to the type III secretion exporter family.

Its subcellular location is the cell membrane. Functionally, part of the bsa type III secretion system, is involved in the intracellular replication of invading bacteria inside the host cell. Probably necessary for the lysis of the vacuole membrane and escape into the host cell cytoplasm. This Burkholderia thailandensis (strain ATCC 700388 / DSM 13276 / CCUG 48851 / CIP 106301 / E264) protein is Secretion apparatus protein BsaZ (bsaZ).